The sequence spans 387 residues: Acetylserotonin O-methyltransferase (387 aa).

Residues Tyr153, Trp170, Glu216, 246–248 (GDF), and Arg263 contribute to the S-adenosyl-L-methionine site. The Proton donor/acceptor role is filled by His266. Asp267 and Gln317 together coordinate substrate. The segment at 355–387 (ARGGGAGARSDGGGGEATSQTGSGTGREVGAQD) is disordered. Residues 356 to 370 (RGGGAGARSDGGGGE) show a composition bias toward gly residues.

The protein belongs to the class I-like SAM-binding methyltransferase superfamily. Cation-independent O-methyltransferase family. In terms of assembly, homodimer.

It catalyses the reaction N-acetylserotonin + S-adenosyl-L-methionine = melatonin + S-adenosyl-L-homocysteine + H(+). Its pathway is aromatic compound metabolism; melatonin biosynthesis; melatonin from serotonin: step 1/2. In terms of biological role, catalyzes the transfer of a methyl group onto N-acetylserotonin, producing melatonin (N-acetyl-5-methoxytryptamine). This Mus musculus molossinus (Japanese house mouse) protein is Acetylserotonin O-methyltransferase (Asmt).